The following is a 415-amino-acid chain: Putative glutamate--cysteine ligase 2 (415 aa).

The protein belongs to the glutamate--cysteine ligase type 2 family. YbdK subfamily.

It catalyses the reaction L-cysteine + L-glutamate + ATP = gamma-L-glutamyl-L-cysteine + ADP + phosphate + H(+). Functionally, ATP-dependent carboxylate-amine ligase which exhibits weak glutamate--cysteine ligase activity. This Bordetella petrii (strain ATCC BAA-461 / DSM 12804 / CCUG 43448) protein is Putative glutamate--cysteine ligase 2.